The primary structure comprises 541 residues: MSKYSGEEFSNNGDFYDDFAHTGDPALDMEYERNYYASRMPENVKYFLMNFCQAVKEGNLYDIQNMYENTFPQISDHHFDKSSWPEETEVGALVENDKVFMILYKELYYRHIHARIPGGPKLDQRINSFFNYCDFFNLIISAPNPVMLELPDIWLWELVDEFVYQFQNFAQYRARLTDKSQEEIQQLCVNHSNVWSILCILNVLHSLVDISNIKKQLEAISGGIDPNTVSGDFGKLSFYKMLGYFSLVGLLRVHSLLGDYYQAIKVLEPIEIHKKSAYSHIPACQISTSYYVGFAYMMMRRYADAIRTFSDILLYIQRTKQLYSTRSYQNDQINKQAEQMYHLLAICLVLHPQCIDESIQQVLREKNYHDAMFKMQCGDLEVFKSFFVFACPRFVSPCPPAADAPMEDYVKDPMEHQLQVFMDEVRQQKDLPTTRSYLKLYTTLPLAKLASFIDPNANDDDVSKLLIRLLCFKHKMRNLVWSKGPSGLEGTFKSGSELDFYIDDDMIHIADTKVSHRYGDFFVRKIMKFNDLNRKLKNINI.

A PCI domain is found at 308 to 516 (TFSDILLYIQ…IHIADTKVSH (209 aa)).

The protein belongs to the eIF-3 subunit L family. In terms of assembly, component of the eukaryotic translation initiation factor 3 (eIF-3) complex. The eIF-3 complex interacts with pix.

Its subcellular location is the cytoplasm. Functionally, component of the eukaryotic translation initiation factor 3 (eIF-3) complex, which is involved in protein synthesis of a specialized repertoire of mRNAs and, together with other initiation factors, stimulates binding of mRNA and methionyl-tRNAi to the 40S ribosome. The eIF-3 complex specifically targets and initiates translation of a subset of mRNAs involved in cell proliferation. The sequence is that of Eukaryotic translation initiation factor 3 subunit L from Drosophila pseudoobscura pseudoobscura (Fruit fly).